The chain runs to 734 residues: Photosystem I P700 chlorophyll a apoprotein A2 (734 aa).

Helical transmembrane passes span 46–69, 135–158, 175–199, 273–291, 330–353, 369–395, 417–439, and 517–535; these read IFAS…FHVA, LYTG…LHLQ, LNHH…HVAI, IAHH…GHMY, IHFQ…QHMY, AALY…IFFI, AIIS…LYVH, and FLVH…LILV. [4Fe-4S] cluster-binding residues include Cys559 and Cys568. Helical transmembrane passes span 575 to 596 and 643 to 665; these read AFYL…YWHW and LSVW…MFLI. Residues His654, Met662, and Tyr670 each coordinate chlorophyll a. A phylloquinone-binding site is contributed by Trp671. The chain crosses the membrane as a helical span at residues 707-727; that stretch reads LVGLAHFSVGYIFTYAAFLIA.

Belongs to the PsaA/PsaB family. As to quaternary structure, the PsaA/B heterodimer binds the P700 chlorophyll special pair and subsequent electron acceptors. PSI consists of a core antenna complex that captures photons, and an electron transfer chain that converts photonic excitation into a charge separation. The eukaryotic PSI reaction center is composed of at least 11 subunits. Requires P700 is a chlorophyll a/chlorophyll a' dimer, A0 is one or more chlorophyll a, A1 is one or both phylloquinones and FX is a shared 4Fe-4S iron-sulfur center. as cofactor.

Its subcellular location is the plastid. The protein resides in the chloroplast thylakoid membrane. It carries out the reaction reduced [plastocyanin] + hnu + oxidized [2Fe-2S]-[ferredoxin] = oxidized [plastocyanin] + reduced [2Fe-2S]-[ferredoxin]. Its function is as follows. PsaA and PsaB bind P700, the primary electron donor of photosystem I (PSI), as well as the electron acceptors A0, A1 and FX. PSI is a plastocyanin-ferredoxin oxidoreductase, converting photonic excitation into a charge separation, which transfers an electron from the donor P700 chlorophyll pair to the spectroscopically characterized acceptors A0, A1, FX, FA and FB in turn. Oxidized P700 is reduced on the lumenal side of the thylakoid membrane by plastocyanin. The chain is Photosystem I P700 chlorophyll a apoprotein A2 from Vitis vinifera (Grape).